The chain runs to 292 residues: Coiled-coil domain-containing protein 137 (292 aa).

The segment covering 1 to 16 (MAGLRRGAAAVAPAGT) has biased composition (low complexity). 4 disordered regions span residues 1-94 (MAGL…AQAA), 139-183 (FLSK…EKAA), 205-243 (PELTAKPRMSVSRDQPGKKSLMLKKLLSPGSVSQPLTTS), and 263-292 (ALKRLQQQRQETQSPQPPHLPPGKKPEMQL). Composition is skewed to basic and acidic residues over residues 57–78 (KNQDEQEIPFRLREIMRSRQEM), 155–164 (PKKEKSERKK), and 173–183 (KARQRREEKAA). A coiled-coil region spans residues 156–194 (KKEKSERKKAFQKRRLDKARQRREEKAAERLEQELLQDT). Residues 222 to 232 (KKSLMLKKLLS) show a composition bias toward low complexity. Serine 232 is subject to Phosphoserine. Positions 234 to 243 (GSVSQPLTTS) are enriched in polar residues. A coiled-coil region spans residues 247–276 (QRIVAEERERAVNAYRALKRLQQQRQETQS).

It localises to the chromosome. This Bos taurus (Bovine) protein is Coiled-coil domain-containing protein 137 (CCDC137).